A 203-amino-acid chain; its full sequence is Holliday junction branch migration complex subunit RuvA (203 aa).

The tract at residues 1 to 64 (MIGRLRGIII…EDAQLLYGFN (64 aa)) is domain I. Residues 65–142 (NKQERTLFKE…KGLHGDLFTP (78 aa)) form a domain II region. The interval 143–154 (AADLVLTSPASP) is flexible linker. Residues 155 to 203 (ATDDAEQEAVAALVALGYKPQEASRMVSKIARPDTSSETLIREALRAAL) form a domain III region.

Belongs to the RuvA family. In terms of assembly, homotetramer. Forms an RuvA(8)-RuvB(12)-Holliday junction (HJ) complex. HJ DNA is sandwiched between 2 RuvA tetramers; dsDNA enters through RuvA and exits via RuvB. An RuvB hexamer assembles on each DNA strand where it exits the tetramer. Each RuvB hexamer is contacted by two RuvA subunits (via domain III) on 2 adjacent RuvB subunits; this complex drives branch migration. In the full resolvosome a probable DNA-RuvA(4)-RuvB(12)-RuvC(2) complex forms which resolves the HJ.

It is found in the cytoplasm. Functionally, the RuvA-RuvB-RuvC complex processes Holliday junction (HJ) DNA during genetic recombination and DNA repair, while the RuvA-RuvB complex plays an important role in the rescue of blocked DNA replication forks via replication fork reversal (RFR). RuvA specifically binds to HJ cruciform DNA, conferring on it an open structure. The RuvB hexamer acts as an ATP-dependent pump, pulling dsDNA into and through the RuvAB complex. HJ branch migration allows RuvC to scan DNA until it finds its consensus sequence, where it cleaves and resolves the cruciform DNA. The polypeptide is Holliday junction branch migration complex subunit RuvA (Shigella flexneri serotype 5b (strain 8401)).